The sequence spans 128 residues: Cystatin-12 (128 aa).

The signal sequence occupies residues 1 to 21; it reads MLWKSVLSVALIVLGIHDCSF. 2 cysteine pairs are disulfide-bonded: Cys82/Cys92 and Cys105/Cys125. N-linked (GlcNAc...) asparagine glycosylation occurs at Asn122.

It belongs to the cystatin family. In terms of tissue distribution, located at the very proximal caput epididymis (at protein level). Expressed in epididymis, Sertoli cells and testis. Also found to be weakly expressed in ovary and prostate.

It is found in the secreted. Functionally, may play a specialized role in spermatogenesis. The polypeptide is Cystatin-12 (Cst12) (Mus musculus (Mouse)).